The sequence spans 376 residues: N-acetyldiaminopimelate deacetylase (376 aa).

Aspartate 69 is a catalytic residue. Glutamate 128 acts as the Proton acceptor in catalysis.

Belongs to the peptidase M20A family. N-acetyldiaminopimelate deacetylase subfamily.

The enzyme catalyses N-acetyl-(2S,6S)-2,6-diaminopimelate + H2O = (2S,6S)-2,6-diaminopimelate + acetate. It participates in amino-acid biosynthesis; L-lysine biosynthesis via DAP pathway; LL-2,6-diaminopimelate from (S)-tetrahydrodipicolinate (acetylase route): step 3/3. In terms of biological role, catalyzes the conversion of N-acetyl-diaminopimelate to diaminopimelate and acetate. The protein is N-acetyldiaminopimelate deacetylase of Bacillus thuringiensis subsp. konkukian (strain 97-27).